The chain runs to 1116 residues: MRFFLTFLLFLFTLFSLFVYDFLRKKNFYLDLDLDIRTRTVKELILNLERFFGLNLYLNFKDIKFEKIIKIEKGKVVVVSFKKRKKKKKFLLKNIPIREIPINLKIGHLDVWTGNEGGVNRVIVKDASLINNELEGEFLYTNLRSFTLNGSIKAKIQRDTLTLKDLLLDSEYFSAKTKGEIKRNTGEILAEVEIKEIRKENFTLSGTKINAKGTINLPVLDINAKAFVKDLIVRNKNYGSIEGIVKGNYELFDKLFLKGEAVNPEGTKIKFTYDVIPEGLLTFSFENLVVDKNTLGINREIRGEFHGNGKVDFKKMFVKVNAFTENLEVIDKKFKGDVLFSYNFSGNGSLNFEFKNSGYAKGNLIINKNKLEGEFSFNDFPVVFQDFNAYLSGEGKFKKGKIFEMEAKIFANNGQFRDFSLQRISSDVKIRDKEIEALVYYGNSFGFVKGKFDNLKGFIQLNNFSLEGKEKSIKISHGSIEFSIQGKSINSKGKLGDLALNLSNIYAKTELEFNFNKKNEKITLEGNGILNVRFKEKSVLENFKYSLLLLDNNLRIFGASKDSILRVVYYISGRSGEFYGKIDKKEFGISLNGEIKNKDVKANFEAFYALLREKIKIKGKIETKEDQVKISLFPTQLRGKRFNYRFNGLNVFLEKENLSVEFKGLDVSLLDKKLLSISPSKGVGTTKNFSFEPVKITGVLNGVLNIAYKGNLYLKSSGTLNLTLLSKHIGSLMKSQMFGKLDYEFVFDGNELKFLARNDEPVRINSLYFYEPFGSAMNLELRKDFFAFALTGWFREGFLNAYAISKNFRDFEVEFVYKNLPVKLKDGIRARIEADGKGKVVVKNFKEIFLTLDTLLDGYVKVKKLPEKKEEEKKTLPVEITLDINFKTENGLIVKLPEGRVYTALNGRIYGKLPEPYYEIDVVLKSGRLEYFGRKFFVKRSTVKLLKEKDKELTEFDFYLNTVSDGYKIFLLVHGTPENPSVYYFSEPPLSREQILFKLISGGVNEGILPVGTVLANELKALGYVKGTIERLFDVNVEIGIKTSSTGEVGALVKLKKKLGSYFSLYYQTASTKDKKDTFWGAEVRSPGSLDLGFSFNVYSDNTREYKLRYVREFDF.

A helical transmembrane segment spans residues 3–20 (FFLTFLLFLFTLFSLFVY).

It is found in the membrane. This is an uncharacterized protein from Aquifex aeolicus (strain VF5).